The following is a 90-amino-acid chain: DNA-binding protein HU-beta (90 aa).

Belongs to the bacterial histone-like protein family. Heterodimer of an alpha and a beta chain.

In terms of biological role, histone-like DNA-binding protein which is capable of wrapping DNA to stabilize it, and thus to prevent its denaturation under extreme environmental conditions. The protein is DNA-binding protein HU-beta (hupB) of Salmonella typhi.